A 359-amino-acid chain; its full sequence is Magnesium transporter NIPA2 (359 aa).

Topologically, residues 1-9 (MSLGRGKYD) are extracellular. Residues 10 to 30 (FYIGLGLAMTSSIFIGGSFIL) traverse the membrane as a helical segment. The Cytoplasmic segment spans residues 31 to 56 (KKKGLLRLARKGSMRAGQGGHAYLKE). Residues 57 to 77 (WLWWAGLLSMGAGEVANFAAY) traverse the membrane as a helical segment. A topological domain (extracellular) is located at residue A78. The chain crosses the membrane as a helical span at residues 79–99 (FAPATLVTPLGALSVLVSAIL). The Cytoplasmic portion of the chain corresponds to 100 to 107 (SSYFLNER). Residues 108–128 (LNLHGKIGCLLSILGSTVMVI) form a helical membrane-spanning segment. Over 129 to 149 (HAPKEEEIETLNEMSHKLGDP) the chain is Extracellular. Residues 150–170 (GFVVFATFVVIVALIFIFVVG) traverse the membrane as a helical segment. The Cytoplasmic portion of the chain corresponds to 171 to 175 (PRHGQ). Residues 176–196 (TNILVYITICSVIGAFSVSCV) form a helical membrane-spanning segment. At 197-215 (KGLGIAIKELLAGKPVLQH) the chain is on the extracellular side. The helical transmembrane segment at 216 to 236 (PLAWILLFSLVVCVSTQINYL) threads the bilayer. At 237 to 246 (NRALDIFNTS) the chain is on the cytoplasmic side. Residues 247 to 267 (IVTPIYYVFFTTSVLTCSAIL) traverse the membrane as a helical segment. Residues 268 to 278 (FKEWQDMPVDD) lie on the Extracellular side of the membrane. The chain crosses the membrane as a helical span at residues 279–299 (VIGTLSGFFTIIVGIFLLHAF). Topologically, residues 300 to 359 (KDVSFSLASLPVSFRKDEKAMNGNLSSMYEVLNNNEDDLPCGIEHTGENISRRNGNLPSF) are cytoplasmic.

It belongs to the NIPA family. As to expression, widely expressed. Expressed at high levels in the kidney.

It localises to the cell membrane. It is found in the early endosome. The enzyme catalyses Mg(2+)(in) = Mg(2+)(out). Functionally, acts as a selective Mg(2+) transporter. The polypeptide is Magnesium transporter NIPA2 (Nipa2) (Mus musculus (Mouse)).